The primary structure comprises 387 residues: Phosphoglycerate kinase (387 aa).

Residues 21-23 (DLN), Arg36, 59-62 (HLGR), Arg113, and Arg146 contribute to the substrate site. Residues Lys197, Glu314, and 340–343 (GGDT) each bind ATP.

This sequence belongs to the phosphoglycerate kinase family. Monomer.

The protein localises to the cytoplasm. It carries out the reaction (2R)-3-phosphoglycerate + ATP = (2R)-3-phospho-glyceroyl phosphate + ADP. Its pathway is carbohydrate degradation; glycolysis; pyruvate from D-glyceraldehyde 3-phosphate: step 2/5. The sequence is that of Phosphoglycerate kinase from Aeromonas hydrophila subsp. hydrophila (strain ATCC 7966 / DSM 30187 / BCRC 13018 / CCUG 14551 / JCM 1027 / KCTC 2358 / NCIMB 9240 / NCTC 8049).